The chain runs to 205 residues: Disintegrin-like leberagin-C (205 aa).

Positions 4–90 (PPVCGNELLE…DCPIDRFHRN (87 aa)) constitute a Disintegrin domain. 9 cysteine pairs are disulfide-bonded: cysteine 7–cysteine 26, cysteine 18–cysteine 36, cysteine 62–cysteine 82, cysteine 69–cysteine 94, cysteine 101–cysteine 106, cysteine 113–cysteine 128, cysteine 151–cysteine 158, cysteine 163–cysteine 171, and cysteine 193–cysteine 198. Positions 68–70 (ECD) match the D/ECD-tripeptide motif. Residue asparagine 120 is glycosylated (N-linked (GlcNAc...) asparagine).

The protein belongs to the venom metalloproteinase (M12B) family. P-III subfamily. P-IIIb sub-subfamily. In terms of assembly, monomer. In terms of tissue distribution, expressed by the venom gland.

The protein localises to the secreted. Its function is as follows. Inhibits platelet aggregation induced by thrombin and arachidonic acid with IC(50) of 40 and 50 nM respectively (in rabbit platetelet-rich plasma). It also inhibits the adhesion of melanoma tumor cells on fibrinogen and fibronectin, by interfering with the function of alpha-V/beta-3 (ITGAV/ITGB3) and, to a lesser extent, with alpha-V/beta-6 (ITGAV/ITGB6) and alpha-5/beta-1 (ITGA5/ITGB1) integrins. This Macrovipera lebetina transmediterranea (Blunt-nosed viper) protein is Disintegrin-like leberagin-C.